A 396-amino-acid chain; its full sequence is Peroxisome proliferator-activated receptor delta (396 aa).

The interval methionine 1 to glutamate 24 is disordered. Residues glutamine 15–glutamate 24 are compositionally biased toward polar residues. A DNA-binding region (nuclear receptor) is located at residues serine 28–phenylalanine 102. NR C4-type zinc fingers lie at residues cysteine 31 to cysteine 51 and cysteine 68 to cysteine 90. Residues phenylalanine 166–aspartate 394 enclose the NR LBD domain.

It belongs to the nuclear hormone receptor family. NR1 subfamily. In terms of assembly, heterodimer with the retinoid X receptor. 'Lys-48'-linked polyubiquitinated; leading to proteasomal degradation. Deubiquitinated and stabilized by OTUD3. In terms of tissue distribution, ubiquitous.

Its subcellular location is the nucleus. Its function is as follows. Ligand-activated transcription factor key mediator of energy metabolism in adipose tissues. Receptor that binds peroxisome proliferators such as hypolipidemic drugs and fatty acids. Has a preference for poly-unsaturated fatty acids, such as gamma-linoleic acid and eicosapentanoic acid. Once activated by a ligand, the receptor binds to promoter elements of target genes. Regulates the peroxisomal beta-oxidation pathway of fatty acids. Functions as a transcription activator for the acyl-CoA oxidase gene. Decreases expression of NPC1L1 once activated by a ligand. In Xenopus laevis (African clawed frog), this protein is Peroxisome proliferator-activated receptor delta (ppard).